The chain runs to 385 residues: Mitochondrial protein C2orf69 (385 aa).

Residues 1-24 (MWGFRLLRSPPLLLLLPQLGIGNA) constitute a mitochondrion transit peptide.

The protein belongs to the C2orf69 family.

The protein localises to the mitochondrion matrix. Functionally, may play a role in the respiratory chain. This Homo sapiens (Human) protein is Mitochondrial protein C2orf69 (C2orf69).